We begin with the raw amino-acid sequence, 258 residues long: Protein STAY-GREEN LIKE, chloroplastic (258 aa).

The protein belongs to the staygreen family. As to expression, strongly expressed in leaves, stems and panicles, and at lower levels in roots and seeds.

Functionally, promotes chlorophyll degradation in leaves. May be involved in LHCI proteins degradation, regulating the balance between LHCI and LHCII. The sequence is that of Protein STAY-GREEN LIKE, chloroplastic from Oryza sativa subsp. japonica (Rice).